An 82-amino-acid chain; its full sequence is ATP synthase subunit c, chloroplastic (82 aa).

Helical transmembrane passes span 4–24 (IISA…AIGP) and 57–77 (LAFM…LLFA).

The protein belongs to the ATPase C chain family. F-type ATPases have 2 components, F(1) - the catalytic core - and F(0) - the membrane proton channel. F(1) has five subunits: alpha(3), beta(3), gamma(1), delta(1), epsilon(1). F(0) has four main subunits: a(1), b(1), b'(1) and c(10-14). The alpha and beta chains form an alternating ring which encloses part of the gamma chain. F(1) is attached to F(0) by a central stalk formed by the gamma and epsilon chains, while a peripheral stalk is formed by the delta, b and b' chains.

The protein resides in the plastid. The protein localises to the chloroplast thylakoid membrane. Its function is as follows. F(1)F(0) ATP synthase produces ATP from ADP in the presence of a proton or sodium gradient. F-type ATPases consist of two structural domains, F(1) containing the extramembraneous catalytic core and F(0) containing the membrane proton channel, linked together by a central stalk and a peripheral stalk. During catalysis, ATP synthesis in the catalytic domain of F(1) is coupled via a rotary mechanism of the central stalk subunits to proton translocation. In terms of biological role, key component of the F(0) channel; it plays a direct role in translocation across the membrane. A homomeric c-ring of between 10-14 subunits forms the central stalk rotor element with the F(1) delta and epsilon subunits. This is ATP synthase subunit c, chloroplastic from Trieres chinensis (Marine centric diatom).